The sequence spans 33 residues: Photosystem II reaction center protein T (33 aa).

Residues 3 to 23 (ALVYTFLLVSTLGIIFFAIFF) form a helical membrane-spanning segment.

It belongs to the PsbT family. In terms of assembly, PSII is composed of 1 copy each of membrane proteins PsbA, PsbB, PsbC, PsbD, PsbE, PsbF, PsbH, PsbI, PsbJ, PsbK, PsbL, PsbM, PsbT, PsbY, PsbZ, Psb30/Ycf12, at least 3 peripheral proteins of the oxygen-evolving complex and a large number of cofactors. It forms dimeric complexes.

It localises to the plastid. Its subcellular location is the chloroplast thylakoid membrane. Its function is as follows. Found at the monomer-monomer interface of the photosystem II (PS II) dimer, plays a role in assembly and dimerization of PSII. PSII is a light-driven water plastoquinone oxidoreductase, using light energy to abstract electrons from H(2)O, generating a proton gradient subsequently used for ATP formation. This chain is Photosystem II reaction center protein T, found in Arabidopsis thaliana (Mouse-ear cress).